The following is a 179-amino-acid chain: Bifunctional protein PyrR (179 aa).

The short motif at 100-112 is the PRPP-binding element; it reads VILVDDVLFTGRT.

Belongs to the purine/pyrimidine phosphoribosyltransferase family. PyrR subfamily. As to quaternary structure, homodimer and homohexamer; in equilibrium.

The enzyme catalyses UMP + diphosphate = 5-phospho-alpha-D-ribose 1-diphosphate + uracil. Regulates transcriptional attenuation of the pyrimidine nucleotide (pyr) operon by binding in a uridine-dependent manner to specific sites on pyr mRNA. This disrupts an antiterminator hairpin in the RNA and favors formation of a downstream transcription terminator, leading to a reduced expression of downstream genes. Its function is as follows. Also displays a weak uracil phosphoribosyltransferase activity which is not physiologically significant. In Geobacillus sp. (strain WCH70), this protein is Bifunctional protein PyrR.